The sequence spans 193 residues: Potassium-transporting ATPase KdpC subunit (193 aa).

A helical transmembrane segment spans residues 7–27 (PALVLFAALTLLTGVAYPLAV).

This sequence belongs to the KdpC family. In terms of assembly, the system is composed of three essential subunits: KdpA, KdpB and KdpC.

It is found in the cell inner membrane. Part of the high-affinity ATP-driven potassium transport (or Kdp) system, which catalyzes the hydrolysis of ATP coupled with the electrogenic transport of potassium into the cytoplasm. This subunit acts as a catalytic chaperone that increases the ATP-binding affinity of the ATP-hydrolyzing subunit KdpB by the formation of a transient KdpB/KdpC/ATP ternary complex. This is Potassium-transporting ATPase KdpC subunit from Rhodospirillum rubrum (strain ATCC 11170 / ATH 1.1.1 / DSM 467 / LMG 4362 / NCIMB 8255 / S1).